The primary structure comprises 383 residues: Probable mannan endo-1,4-beta-mannosidase A (383 aa).

Residues 1 to 21 (MKLSNALLTLASLALANVSTA) form the signal peptide. N-linked (GlcNAc...) asparagine glycosylation occurs at Asn-17. Trp-92 contacts substrate. An N-linked (GlcNAc...) asparagine glycan is attached at Asn-194. Position 205 (Asn-205) interacts with substrate. The Proton donor role is filled by Glu-206. Asn-263 carries N-linked (GlcNAc...) asparagine glycosylation. A substrate-binding site is contributed by Tyr-281. Residue Glu-314 is the Nucleophile of the active site. Trp-344 is a substrate binding site.

Belongs to the glycosyl hydrolase 5 (cellulase A) family.

It localises to the secreted. It catalyses the reaction Random hydrolysis of (1-&gt;4)-beta-D-mannosidic linkages in mannans, galactomannans and glucomannans.. Endo-1,4-mannanase, a crucial enzyme for depolymerization of seed galactomannans and wood galactoglucomannans. This chain is Probable mannan endo-1,4-beta-mannosidase A (manA), found in Aspergillus niger (strain ATCC MYA-4892 / CBS 513.88 / FGSC A1513).